Consider the following 1025-residue polypeptide: DNA ligase 4 (1025 aa).

The tract at residues 1–36 (MMQPTPAPSSAPGSPQRTQAEPEMETPSYPQPPQNV) is disordered. The ATP site is built by glutamate 289, lysine 291, leucine 292, arginine 296, glutamate 349, phenylalanine 387, glutamate 447, lysine 452, lysine 469, and lysine 471. Residue lysine 291 is the N6-AMP-lysine intermediate of the active site. Glutamate 349 contributes to the Mg(2+) binding site. Glutamate 447 lines the Mg(2+) pocket. The BRCT 1 domain maps to 667–763 (VKTDIFNGMK…EPAPFKKKYF (97 aa)). The segment at 773–904 (ADEYNEDDGE…TTPDVDGDVK (132 aa)) is disordered. Acidic residues-rich tracts occupy residues 775–785 (EYNEDDGEEEG) and 806–816 (SETEDEDEEQA). Residues 817 to 838 (PEIKEEQDGELHEWLKVDDRKS) show a composition bias toward basic and acidic residues. Acidic residues predominate over residues 845–870 (DEEDSVTEDDSDNADVADEEEPDLDD). The span at 891–904 (RHRETTPDVDGDVK) shows a compositional bias: basic and acidic residues. The BRCT 2 domain occupies 915–1025 (DPDVIFKHLC…TLLDEEEFAP (111 aa)).

This sequence belongs to the ATP-dependent DNA ligase family. Requires Mg(2+) as cofactor.

The protein resides in the nucleus. It catalyses the reaction ATP + (deoxyribonucleotide)n-3'-hydroxyl + 5'-phospho-(deoxyribonucleotide)m = (deoxyribonucleotide)n+m + AMP + diphosphate.. DNA ligase involved in DNA non-homologous end joining (NHEJ); required for double-strand break (DSB) repair. This chain is DNA ligase 4 (LIG4), found in Coprinopsis cinerea (Inky cap fungus).